Consider the following 156-residue polypeptide: Lipoprotein signal peptidase (156 aa).

The chain crosses the membrane as a helical span at residues 62-82; it reads GNTVFMVLSAVIIAILSYTKI. Active-site residues include aspartate 115 and aspartate 133. A helical transmembrane segment spans residues 126 to 146; that stretch reads WPAFNLADLTITCGVIVFLAM.

This sequence belongs to the peptidase A8 family.

Its subcellular location is the cell inner membrane. The enzyme catalyses Release of signal peptides from bacterial membrane prolipoproteins. Hydrolyzes -Xaa-Yaa-Zaa-|-(S,diacylglyceryl)Cys-, in which Xaa is hydrophobic (preferably Leu), and Yaa (Ala or Ser) and Zaa (Gly or Ala) have small, neutral side chains.. It participates in protein modification; lipoprotein biosynthesis (signal peptide cleavage). Its function is as follows. This protein specifically catalyzes the removal of signal peptides from prolipoproteins. The chain is Lipoprotein signal peptidase from Anaplasma phagocytophilum (strain HZ).